Reading from the N-terminus, the 436-residue chain is 3-ketoacyl-CoA thiolase (436 aa).

Catalysis depends on cysteine 99, which acts as the Acyl-thioester intermediate. Active-site proton acceptor residues include histidine 392 and cysteine 422.

This sequence belongs to the thiolase-like superfamily. Thiolase family. As to quaternary structure, heterotetramer of two alpha chains (FadJ) and two beta chains (FadI).

It is found in the cytoplasm. It carries out the reaction an acyl-CoA + acetyl-CoA = a 3-oxoacyl-CoA + CoA. It functions in the pathway lipid metabolism; fatty acid beta-oxidation. Its function is as follows. Catalyzes the final step of fatty acid oxidation in which acetyl-CoA is released and the CoA ester of a fatty acid two carbons shorter is formed. The protein is 3-ketoacyl-CoA thiolase of Salmonella dublin (strain CT_02021853).